A 280-amino-acid chain; its full sequence is Probable endonuclease 4 (280 aa).

Positions 69, 109, 145, 179, 182, 216, 229, 231, and 261 each coordinate Zn(2+).

The protein belongs to the AP endonuclease 2 family. The cofactor is Zn(2+).

It catalyses the reaction Endonucleolytic cleavage to 5'-phosphooligonucleotide end-products.. In terms of biological role, endonuclease IV plays a role in DNA repair. It cleaves phosphodiester bonds at apurinic or apyrimidinic (AP) sites, generating a 3'-hydroxyl group and a 5'-terminal sugar phosphate. This Aliarcobacter butzleri (strain RM4018) (Arcobacter butzleri) protein is Probable endonuclease 4.